Reading from the N-terminus, the 341-residue chain is MDKLVSILVPCYKSKPFLKRFFNSLLKQDLNQAKIIFFNDNVADETYEVLQKFKKEHNNLAIEVYCDKQNEGIGKVRDKLVNLVTTPYFYFIDPDDCFNNKNVIKEIVESIKKEDFDLGVLKSMVYLCFLKHDFIIKFLPLKGIFQGRVKLINNNNVNKLNYIKNNDQYIWNIVINTDFFRKLNLTFESRLFEDIPIWYPMFFSSQKIVFIDVIGTNYFIRNDSLSTTISAPRYLNLIQCYEKLYVNLSQNGSLASFIDPNHKIEARFWRRQMFVWFALFSFEYFKKNFSESKKILEKLFVFLEKNGVYERVFQTKNQGIYYIWVQRLKYFKHVLESKSDN.

It belongs to the glycosyltransferase 2 family. Mg(2+) serves as cofactor.

Its subcellular location is the cell membrane. It carries out the reaction a 1,2-diacyl-sn-glycerol + UDP-alpha-D-glucose = a 1,2-diacyl-3-O-(beta-D-glucopyranosyl)-sn-glycerol + UDP + H(+). The catalysed reaction is a 1,2-diacyl-sn-glycerol + UDP-alpha-D-galactose = a 1,2-diacyl-3-O-(beta-D-galactosyl)-sn-glycerol + UDP + H(+). It catalyses the reaction a 1,2-diacyl-3-O-(beta-D-glucopyranosyl)-sn-glycerol + UDP-alpha-D-glucose = a 1,2-diacyl-3-O-(beta-D-Glc-(1-&gt;6)-beta-D-Glc)-sn-glycerol + UDP + H(+). The enzyme catalyses a 1,2-diacyl-3-O-(beta-D-galactosyl)-sn-glycerol + UDP-alpha-D-galactose = a 1,2-diacyl-3-O-[beta-D-galactosyl-(1-&gt;6)-beta-D-galactosyl]-sn-glycerol + UDP + H(+). It functions in the pathway glycolipid metabolism; diglucosyl-diacylglycerol biosynthesis. Its activity is regulated as follows. Activated by the negatively charged lipid dioleoylphosphatidylglycerol (DOPG) and inhibited by N-(n-nonyl)deoxygalactonojirimycin (C9J). In terms of biological role, processive glycosyltransferase involved in the biosynthesis of both the non-bilayer-prone beta-monoglycosyldiacylglycerol and the bilayer-forming membrane lipid beta-diglycosyldiacylglycerol. These components contribute to regulate the properties and stability of the membrane. Catalyzes sequentially the transfers of glucosyl or galactosyl residues from UDP-Glc or UDP-Gal to diacylglycerol (DAG) acceptor to form the corresponding beta-glycosyl-DAG (3-O-(beta-D-glycopyranosyl)-1,2-diacyl-sn-glycerol), which then acts as acceptor to give beta-diglycosyl-DAG product (3-O-(beta-D-glycopyranosyl-beta-(1-&gt;6)-D-glycopyranosyl)-1,2-diacyl-sn-glycerol). Dioleoylglycerol (DOG) is a preferred sugar acceptor than 3-O-(beta-D-glucopyranosyl)-1,2-dioleoyl-sn-glycerol. This Mycoplasma genitalium (strain ATCC 33530 / DSM 19775 / NCTC 10195 / G37) (Mycoplasmoides genitalium) protein is Processive diacylglycerol beta-glycosyltransferase.